The primary structure comprises 277 residues: Xyloglucan endotransglucosylase/hydrolase protein 19 (277 aa).

The N-terminal stretch at 1–21 (MKSFTFLILFLFAAQSISVYA) is a signal peptide. The region spanning 22–213 (GSFHKDVKIH…WSKAPFTAYY (192 aa)) is the GH16 domain. Catalysis depends on glutamate 99, which acts as the Nucleophile. The active-site Proton donor is glutamate 103. Glutamate 103 provides a ligand contact to xyloglucan. Asparagine 107 is a glycosylation site (N-linked (GlcNAc...) asparagine). Xyloglucan-binding positions include 116–118 (HTN), 126–128 (DKE), 192–193 (HW), and glycine 197. Cystine bridges form between cysteine 221–cysteine 230 and cysteine 262–cysteine 276. Position 267 (arginine 267) interacts with xyloglucan.

The protein belongs to the glycosyl hydrolase 16 family. XTH group 2 subfamily. In terms of processing, contains at least one intrachain disulfide bond essential for its enzymatic activity. In terms of tissue distribution, root specific.

The protein resides in the secreted. It localises to the cell wall. It is found in the extracellular space. The protein localises to the apoplast. It carries out the reaction breaks a beta-(1-&gt;4) bond in the backbone of a xyloglucan and transfers the xyloglucanyl segment on to O-4 of the non-reducing terminal glucose residue of an acceptor, which can be a xyloglucan or an oligosaccharide of xyloglucan.. In terms of biological role, possesses xyloglucan endotransglucosylase (XET) activity in vitro. Does not possess xyloglucan endohydrolysis (XEH) activity. Cleaves and religates xyloglucan polymers, an essential constituent of the primary cell wall, and thereby participates in cell wall construction of growing tissues. Involved in cell proliferation in the tissue reunion process of wounded inflorescence stems. Maybe a downstream target of NAC071 as a consequence of auxin action in wounded stems. This is Xyloglucan endotransglucosylase/hydrolase protein 19 from Arabidopsis thaliana (Mouse-ear cress).